Reading from the N-terminus, the 196-residue chain is Small ribosomal subunit protein uS4C (196 aa).

One can recognise an S4 RNA-binding domain in the interval 87–149; the sequence is CRLDNVVYRI…HRQNEMFSNN (63 aa).

It belongs to the universal ribosomal protein uS4 family. In terms of assembly, part of the 30S ribosomal subunit. Contacts protein S5. The interaction surface between S4 and S5 is involved in control of translational fidelity.

Functionally, one of the primary rRNA binding proteins, it binds directly to 16S rRNA where it nucleates assembly of the body of the 30S subunit. With S5 and S12 plays an important role in translational accuracy. The protein is Small ribosomal subunit protein uS4C (rpsD3) of Clostridium acetobutylicum (strain ATCC 824 / DSM 792 / JCM 1419 / IAM 19013 / LMG 5710 / NBRC 13948 / NRRL B-527 / VKM B-1787 / 2291 / W).